The primary structure comprises 142 residues: HTH-type transcriptional regulator MntR (142 aa).

In terms of domain architecture, HTH dtxR-type spans 1–63 (MPTPSMEDYI…YEKYRGLVLT (63 aa)). Residues Asp8, Glu11, His77, Glu99, Glu102, and His103 each coordinate Mn(2+).

This sequence belongs to the DtxR/MntR family. In terms of assembly, homodimer.

The protein resides in the cytoplasm. Its activity is regulated as follows. DNA binding is strongly activated by Mn(2+). In terms of biological role, central regulator of manganese homeostasis. The sequence is that of HTH-type transcriptional regulator MntR from Bacillus cereus (strain B4264).